The chain runs to 529 residues: Isoleucine--tRNA ligase (529 aa).

E482 provides a ligand contact to L-isoleucyl-5'-AMP. Positions 523–527 (KMSKS) match the 'KMSKS' region motif. Residue K526 participates in ATP binding.

Belongs to the class-I aminoacyl-tRNA synthetase family. IleS type 1 subfamily. Monomer.

It localises to the cytoplasm. It catalyses the reaction tRNA(Ile) + L-isoleucine + ATP = L-isoleucyl-tRNA(Ile) + AMP + diphosphate. In terms of biological role, catalyzes the attachment of isoleucine to tRNA(Ile). As IleRS can inadvertently accommodate and process structurally similar amino acids such as valine, to avoid such errors it has two additional distinct tRNA(Ile)-dependent editing activities. One activity is designated as 'pretransfer' editing and involves the hydrolysis of activated Val-AMP. The other activity is designated 'posttransfer' editing and involves deacylation of mischarged Val-tRNA(Ile). This is Isoleucine--tRNA ligase (ileS) from Aquifex pyrophilus.